The primary structure comprises 212 residues: Large ribosomal subunit protein bL25 (212 aa).

The tract at residues 1–25 (MSQSTIHKIAVKKRTETGKNENNRL) is disordered. Positions 13–24 (KRTETGKNENNR) are enriched in basic and acidic residues.

It belongs to the bacterial ribosomal protein bL25 family. CTC subfamily. As to quaternary structure, part of the 50S ribosomal subunit; part of the 5S rRNA/L5/L18/L25 subcomplex. Contacts the 5S rRNA. Binds to the 5S rRNA independently of L5 and L18.

Its function is as follows. This is one of the proteins that binds to the 5S RNA in the ribosome where it forms part of the central protuberance. This chain is Large ribosomal subunit protein bL25, found in Leptospira borgpetersenii serovar Hardjo-bovis (strain L550).